The primary structure comprises 281 residues: 3-hydroxyanthranilate 3,4-dioxygenase (281 aa).

The interval 1-162 is domain A (catalytic); sequence MAGVTAIEIP…SNEFKTGKPG (162 aa). Residue arginine 45 participates in O2 binding. Residues histidine 49, glutamate 55, and histidine 93 each coordinate Fe cation. A substrate-binding site is contributed by glutamate 55. The substrate site is built by arginine 97 and glutamate 107. Residues 163 to 179 form a linker region; sequence KGTFACNAPYEARWTDL. The segment at 180 to 281 is domain B; sequence PVPINRKEFI…GFAITIRMPG (102 aa).

It belongs to the 3-HAO family. Fe(2+) serves as cofactor.

Its subcellular location is the cytoplasm. The enzyme catalyses 3-hydroxyanthranilate + O2 = (2Z,4Z)-2-amino-3-carboxymuconate 6-semialdehyde. Its pathway is cofactor biosynthesis; NAD(+) biosynthesis; quinolinate from L-kynurenine: step 3/3. Functionally, catalyzes the oxidative ring opening of 3-hydroxyanthranilate to 2-amino-3-carboxymuconate semialdehyde, which spontaneously cyclizes to quinolinate. The chain is 3-hydroxyanthranilate 3,4-dioxygenase (haao-1) from Caenorhabditis briggsae.